We begin with the raw amino-acid sequence, 162 residues long: Endoribonuclease YbeY (162 aa).

Zn(2+) contacts are provided by His-128, His-132, and His-138.

The protein belongs to the endoribonuclease YbeY family. The cofactor is Zn(2+).

Its subcellular location is the cytoplasm. Its function is as follows. Single strand-specific metallo-endoribonuclease involved in late-stage 70S ribosome quality control and in maturation of the 3' terminus of the 16S rRNA. The sequence is that of Endoribonuclease YbeY from Lactococcus lactis subsp. cremoris (strain MG1363).